The primary structure comprises 305 residues: Phosphatidate cytidylyltransferase (305 aa).

Transmembrane regions (helical) follow at residues Leu-24–Val-44, Pro-97–Phe-117, Leu-124–Ile-144, Leu-151–Ile-171, Thr-202–Ser-222, Ile-232–Gly-252, and Met-277–Ile-297.

The protein belongs to the CDS family.

It is found in the cell membrane. The catalysed reaction is a 1,2-diacyl-sn-glycero-3-phosphate + CTP + H(+) = a CDP-1,2-diacyl-sn-glycerol + diphosphate. It functions in the pathway phospholipid metabolism; CDP-diacylglycerol biosynthesis; CDP-diacylglycerol from sn-glycerol 3-phosphate: step 3/3. The chain is Phosphatidate cytidylyltransferase (cdsA) from Chlamydia muridarum (strain MoPn / Nigg).